Consider the following 94-residue polypeptide: Small ribosomal subunit protein uS19 (94 aa).

This sequence belongs to the universal ribosomal protein uS19 family.

In terms of biological role, protein S19 forms a complex with S13 that binds strongly to the 16S ribosomal RNA. The polypeptide is Small ribosomal subunit protein uS19 (Finegoldia magna (strain ATCC 29328 / DSM 20472 / WAL 2508) (Peptostreptococcus magnus)).